The chain runs to 397 residues: 1-deoxy-D-xylulose 5-phosphate reductoisomerase (397 aa).

NADPH is bound by residues threonine 10, glycine 11, serine 12, isoleucine 13, glutamine 38, and asparagine 123. Lysine 124 contributes to the 1-deoxy-D-xylulose 5-phosphate binding site. Glutamate 125 is a binding site for NADPH. Aspartate 149 contacts Mn(2+). Serine 150, glutamate 151, serine 185, and histidine 208 together coordinate 1-deoxy-D-xylulose 5-phosphate. Glutamate 151 contacts Mn(2+). Position 214 (glycine 214) interacts with NADPH. Positions 221, 226, 227, and 230 each coordinate 1-deoxy-D-xylulose 5-phosphate. Glutamate 230 contributes to the Mn(2+) binding site.

It belongs to the DXR family. Mg(2+) serves as cofactor. It depends on Mn(2+) as a cofactor.

It carries out the reaction 2-C-methyl-D-erythritol 4-phosphate + NADP(+) = 1-deoxy-D-xylulose 5-phosphate + NADPH + H(+). It participates in isoprenoid biosynthesis; isopentenyl diphosphate biosynthesis via DXP pathway; isopentenyl diphosphate from 1-deoxy-D-xylulose 5-phosphate: step 1/6. Functionally, catalyzes the NADPH-dependent rearrangement and reduction of 1-deoxy-D-xylulose-5-phosphate (DXP) to 2-C-methyl-D-erythritol 4-phosphate (MEP). This Idiomarina loihiensis (strain ATCC BAA-735 / DSM 15497 / L2-TR) protein is 1-deoxy-D-xylulose 5-phosphate reductoisomerase.